A 115-amino-acid chain; its full sequence is Large ribosomal subunit protein bL19 (115 aa).

Belongs to the bacterial ribosomal protein bL19 family.

In terms of biological role, this protein is located at the 30S-50S ribosomal subunit interface and may play a role in the structure and function of the aminoacyl-tRNA binding site. The chain is Large ribosomal subunit protein bL19 from Tropheryma whipplei (strain TW08/27) (Whipple's bacillus).